The chain runs to 347 residues: MTVPARGFLLLRGRLGRVPALGRSTAPPVRAPGGPRSAFRGFRSSGVRHEAVIISGTEMAKHIQKEIKQGVESWISLGNRRPHLSIILVGDNPASHTYVRNKIRAASAVGICSELILKPKDVSQEELLDITDQLNMDPRVSGILVQLPLPDHVDERMICNGIAPEKDVDGFHIINIGRLCLDQHSLIPATASAVWEIITRTGIQTFGKNVVVAGRSKNVGMPIAMLLHTDGEHERPGGDATVTIAHRYTPKEQLKTHTQLADVIIVAAGIPKLITSDMVKEGAAVIDVGINYVHDPVTGKTKLVGDVDFEAVKKKAGFITPVPGGVGPMTVAMLLKNTLLAAKKIIY.

Substrate contacts are provided by residues 98 to 102 and 145 to 147; these read YVRNK and VQL. Residues 214 to 216 and Arg247 each bind NAD(+); that span reads GRS. Position 323–327 (323–327) interacts with substrate; the sequence is PGGVG.

The protein belongs to the tetrahydrofolate dehydrogenase/cyclohydrolase family. It depends on Mg(2+) as a cofactor.

It localises to the mitochondrion inner membrane. It carries out the reaction (6R)-5,10-methylene-5,6,7,8-tetrahydrofolate + NAD(+) = (6R)-5,10-methenyltetrahydrofolate + NADH. It catalyses the reaction (6R)-5,10-methenyltetrahydrofolate + H2O = (6R)-10-formyltetrahydrofolate + H(+). The enzyme catalyses (6R)-5,10-methylene-5,6,7,8-tetrahydrofolate + NADP(+) = (6R)-5,10-methenyltetrahydrofolate + NADPH. Its pathway is one-carbon metabolism; tetrahydrofolate interconversion. Its function is as follows. Bifunctional mitochondrial folate-interconverting enzyme that has both NAD/NADP-dependent methylenetetrahydrofolate dehydrogenase and methenyltetrahydrofolate cyclohydrolase activities. The chain is Bifunctional methylenetetrahydrofolate dehydrogenase/cyclohydrolase 2, mitochondrial from Callithrix jacchus (White-tufted-ear marmoset).